Consider the following 334-residue polypeptide: DNA-directed RNA polymerase subunit alpha (334 aa).

Positions 1–231 (MNMIKIEPYI…KQMSIFGVDL (231 aa)) are alpha N-terminal domain (alpha-NTD). Residues 247 to 334 (ELKTLMIKID…NRKLAKLKSN (88 aa)) form an alpha C-terminal domain (alpha-CTD) region.

It belongs to the RNA polymerase alpha chain family. In terms of assembly, homodimer. The RNAP catalytic core consists of 2 alpha, 1 beta/beta' and 1 omega subunit. When a sigma factor is associated with the core the holoenzyme is formed, which can initiate transcription.

The catalysed reaction is RNA(n) + a ribonucleoside 5'-triphosphate = RNA(n+1) + diphosphate. Functionally, DNA-dependent RNA polymerase catalyzes the transcription of DNA into RNA using the four ribonucleoside triphosphates as substrates. This is DNA-directed RNA polymerase subunit alpha from Helicobacter hepaticus (strain ATCC 51449 / 3B1).